We begin with the raw amino-acid sequence, 549 residues long: Hydroxylamine reductase (549 aa).

[4Fe-4S] cluster is bound by residues cysteine 3, cysteine 6, cysteine 15, and cysteine 21. Residues histidine 244, glutamate 268, cysteine 313, cysteine 405, cysteine 433, cysteine 458, glutamate 492, and lysine 494 each contribute to the hybrid [4Fe-2O-2S] cluster site. Cysteine 405 carries the post-translational modification Cysteine persulfide.

This sequence belongs to the HCP family. Requires [4Fe-4S] cluster as cofactor. It depends on hybrid [4Fe-2O-2S] cluster as a cofactor.

It is found in the cytoplasm. It catalyses the reaction A + NH4(+) + H2O = hydroxylamine + AH2 + H(+). In terms of biological role, catalyzes the reduction of hydroxylamine to form NH(3) and H(2)O. The chain is Hydroxylamine reductase from Gloeothece citriformis (strain PCC 7424) (Cyanothece sp. (strain PCC 7424)).